Here is a 124-residue protein sequence, read N- to C-terminus: MPTLQQLVRKGRIQKHTKTKTPALNNSPQKRGICIRSYTITPKKPNSALRKVARVRLTSKLEITAYIPGIGHNIQEHSVLLIRGGRVKDLPGVRYQIIRGTRDVSGVTARRQSHSKYGTKKVKN.

This sequence belongs to the universal ribosomal protein uS12 family. As to quaternary structure, part of the 30S ribosomal subunit.

The protein resides in the plastid. Functionally, with S4 and S5 plays an important role in translational accuracy. Located at the interface of the 30S and 50S subunits. This is Small ribosomal subunit protein uS12c (rps12) from Helicosporidium sp. subsp. Simulium jonesii (Green alga).